Here is a 440-residue protein sequence, read N- to C-terminus: Phosphatidylcholine-sterol acyltransferase (440 aa).

The first 24 residues, 1–24 (MGPPGSPWQWVPLLLGLLLPPAAP), serve as a signal peptide directing secretion. A glycan (N-linked (GlcNAc...) asparagine) is linked at Asn44. An intrachain disulfide couples Cys74 to Cys98. Residue Asn108 is glycosylated (N-linked (GlcNAc...) asparagine). Ser205 functions as the Nucleophile in the catalytic mechanism. Asn296 is a glycosylation site (N-linked (GlcNAc...) asparagine). Residues Cys337 and Cys380 are joined by a disulfide bond. Catalysis depends on charge relay system residues Asp369 and His401. Asn408 carries an N-linked (GlcNAc...) asparagine glycan.

This sequence belongs to the AB hydrolase superfamily. Lipase family. In terms of tissue distribution, most abundant in liver and cerebellum.

It localises to the secreted. It carries out the reaction a sterol + a 1,2-diacyl-sn-glycero-3-phosphocholine = a sterol ester + a 1-acyl-sn-glycero-3-phosphocholine. Its activity is regulated as follows. APOA1 is the most potent activator in plasma. Also activated by APOE, APOC1 and APOA4. Functionally, central enzyme in the extracellular metabolism of plasma lipoproteins. Synthesized mainly in the liver and secreted into plasma where it converts cholesterol and phosphatidylcholines (lecithins) to cholesteryl esters and lysophosphatidylcholines on the surface of high and low density lipoproteins (HDLs and LDLs). The cholesterol ester is then transported back to the liver. Has a preference for plasma 16:0-18:2 or 18:O-18:2 phosphatidylcholines. Also produced in the brain by primary astrocytes, and esterifies free cholesterol on nascent APOE-containing lipoproteins secreted from glia and influences cerebral spinal fluid (CSF) APOE- and APOA1 levels. Together with APOE and the cholesterol transporter ABCA1, plays a key role in the maturation of glial-derived, nascent lipoproteins. Required for remodeling high-density lipoprotein particles into their spherical forms. The polypeptide is Phosphatidylcholine-sterol acyltransferase (LCAT) (Papio anubis (Olive baboon)).